Here is a 145-residue protein sequence, read N- to C-terminus: Late embryogenesis abundant protein D-11 (145 aa).

Residues 1-18 (MAHFQNQYSAPEVTQTDA) are compositionally biased toward polar residues. The disordered stretch occupies residues 1 to 136 (MAHFQNQYSA…EAPWSPQPLI (136 aa)). The segment covering 47 to 57 (GHHHGGHHGLH) has biased composition (basic residues). Residues 58–68 (RTGSSSSSSSS) are compositionally biased toward low complexity. Basic and acidic residues predominate over residues 82-96 (KERLKEKIPGNKEHQ). The segment covering 97–107 (SQATSTTTPGQ) has biased composition (polar residues).

It belongs to the plant dehydrin family.

LEA protein are late embryogenesis abundant in higher plant seed embryos. There are two subsets of LEA proteins (5a, and 5b), the first ones are expressed when the cotyledon weight reach 80 mg and the second set are expressed above 100 mg. The function of those proteins is not known. The protein is Late embryogenesis abundant protein D-11 of Gossypium hirsutum (Upland cotton).